Consider the following 114-residue polypeptide: Dolichyl-diphosphooligosaccharide--protein glycosyltransferase subunit DAD1 (114 aa).

The Cytoplasmic segment spans residues 1 to 30 (MPKAAGDAKLLIQSLNKAYAATPTNLKIID). Residues 31-51 (LYVVFAVVTALLQVVYMGIVG) traverse the membrane as a helical segment. A topological domain (lumenal) is located at residue S52. The chain crosses the membrane as a helical span at residues 53-73 (FPFNSFLSGVLSCIGTAVLAV). Topologically, residues 74 to 93 (CHRIQVNKDNKEFKDLAPER) are cytoplasmic. Residues 94 to 114 (AFADFVLCSLVLHLVIMNFLG) form a helical membrane-spanning segment.

This sequence belongs to the DAD/OST2 family. As to quaternary structure, component of the oligosaccharyltransferase (OST) complex.

It localises to the endoplasmic reticulum membrane. It functions in the pathway protein modification; protein glycosylation. Functionally, subunit of the oligosaccharyl transferase (OST) complex that catalyzes the initial transfer of a defined glycan (Glc(3)Man(9)GlcNAc(2) in eukaryotes) from the lipid carrier dolichol-pyrophosphate to an asparagine residue within an Asn-X-Ser/Thr consensus motif in nascent polypeptide chains, the first step in protein N-glycosylation. N-glycosylation occurs cotranslationally and the complex associates with the Sec61 complex at the channel-forming translocon complex that mediates protein translocation across the endoplasmic reticulum (ER). All subunits are required for a maximal enzyme activity. The protein is Dolichyl-diphosphooligosaccharide--protein glycosyltransferase subunit DAD1 (DAD1) of Hordeum vulgare (Barley).